Here is a 344-residue protein sequence, read N- to C-terminus: Heat-inducible transcription repressor HrcA (344 aa).

The protein belongs to the HrcA family.

Functionally, negative regulator of class I heat shock genes (grpE-dnaK-dnaJ and groELS operons). Prevents heat-shock induction of these operons. In Streptococcus mutans serotype c (strain ATCC 700610 / UA159), this protein is Heat-inducible transcription repressor HrcA.